A 505-amino-acid polypeptide reads, in one-letter code: Maturase K (505 aa).

This sequence belongs to the intron maturase 2 family. MatK subfamily.

It is found in the plastid. Its subcellular location is the chloroplast. Usually encoded in the trnK tRNA gene intron. Probably assists in splicing its own and other chloroplast group II introns. The protein is Maturase K of Phaulothamnus spinescens (Snake-eyes).